Here is an 855-residue protein sequence, read N- to C-terminus: Envelope glycoprotein gp150 (855 aa).

The Extracellular portion of the chain corresponds to 1–784 (MAEGFAVNRQ…WLGNIPRYLK (784 aa)). N220, N258, N269, N274, N298, N330, N336, N342, N418, N422, N448, N469, N481, N499, N518, N531, and N548 each carry an N-linked (GlcNAc...) asparagine; by host glycan. A fusion peptide region spans residues 615-635 (VMLALATVLSMAGAGTGATAI). The stretch at 642-692 (HQVLATHQETIEKITEALKVNNLRLVTLEHQVLVIGLKVEAIEKFLYTAFA) forms a coiled coil. Residues 661-679 (VNNLRLVTLEHQVLVIGLK) form an immunosuppression region. N-linked (GlcNAc...) asparagine; by host glycans are attached at residues N716, N720, and N736. The stretch at 735-771 (YNQTKDLQQKFYEIIMDMEQNNVQGRKGLQQLQEWED) forms a coiled coil. A helical membrane pass occupies residues 785-805 (GLLGGILGIGLGVLLLILCLP). Topologically, residues 806 to 855 (TLVDCIRNCISKVLGYTVIAMPEVEEEEIQPPMELRRNGRQCDMSEKEEE) are cytoplasmic. The interval 835–855 (QPPMELRRNGRQCDMSEKEEE) is disordered.

As to quaternary structure, the mature envelope protein (Env) consists of a trimer of SU-TM heterodimers attached by noncovalent interactions or by a labile interchain disulfide bond. Specific enzymatic cleavages in vivo yield mature proteins. Envelope glycoproteins are synthesized as an inactive precursor that is N-glycosylated and processed likely by host cell furin or by a furin-like protease in the Golgi to yield the mature SU and TM proteins. The cleavage site between SU and TM requires the minimal sequence [KR]-X-[KR]-R.

It localises to the virion membrane. Its subcellular location is the host cell membrane. Its function is as follows. The surface protein (SU) attaches the virus to the host cell by binding to its receptor. This interaction triggers the refolding of the transmembrane protein (TM) and is thought to activate its fusogenic potential by unmasking its fusion peptide. Fusion occurs at the host cell plasma membrane. In terms of biological role, the transmembrane protein (TM) acts as a class I viral fusion protein. Under the current model, the protein has at least 3 conformational states: pre-fusion native state, pre-hairpin intermediate state, and post-fusion hairpin state. During viral and target cell membrane fusion, the coiled coil regions (heptad repeats) assume a trimer-of-hairpins structure, positioning the fusion peptide in close proximity to the C-terminal region of the ectodomain. The formation of this structure appears to drive apposition and subsequent fusion of viral and target cell membranes. Membranes fusion leads to delivery of the nucleocapsid into the cytoplasm. This is Envelope glycoprotein gp150 (env) from Feline immunodeficiency virus (strain UK2) (FIV).